A 303-amino-acid polypeptide reads, in one-letter code: MKSSASAPAKAILFGEHAVVYSKPAIAAAIDRRVTVTVSESSSTHVTIPSLGIRHSSERPSGGILDYIGRCLELYHDASPLDIRVEMEIPAGSGLGSSAALTVALIGALDRYHGRDHGPGETAARAHRVEVDVQGAASPLDTAISTYGGLVYLDSQRRVRQFEADLGDLVIAHLDYSGETARMVAGVAERFRRFPDIMGRIMDTVESITNTAYRELLRNNTEPLGELMNLNQGLLDSMGVSTRELSMMVYEARNAGAAGSKITGAGGGGSIIAHCPGCVDDVVTALNRNWKAMRAEFSVKGLI.

ATP is bound at residue 90 to 100; the sequence is PAGSGLGSSAA. Residue Asp-141 is the Proton acceptor of the active site.

This sequence belongs to the GHMP kinase family. Mevalonate kinase subfamily. Homodimer. The cofactor is Mg(2+).

It is found in the cytoplasm. It catalyses the reaction (R)-mevalonate + ATP = (R)-5-phosphomevalonate + ADP + H(+). Its pathway is isoprenoid biosynthesis; isopentenyl diphosphate biosynthesis via mevalonate pathway; isopentenyl diphosphate from (R)-mevalonate: step 1/3. Catalyzes the phosphorylation of (R)-mevalonate (MVA) to (R)-mevalonate 5-phosphate (MVAP). Functions in the mevalonate (MVA) pathway leading to isopentenyl diphosphate (IPP), a key precursor for the biosynthesis of isoprenoid compounds such as archaeal membrane lipids. This is Mevalonate kinase from Methanothermobacter thermautotrophicus (strain ATCC 29096 / DSM 1053 / JCM 10044 / NBRC 100330 / Delta H) (Methanobacterium thermoautotrophicum).